A 157-amino-acid chain; its full sequence is tRNA (cytidine(34)-2'-O)-methyltransferase (157 aa).

Positions 78, 100, 122, and 130 each coordinate S-adenosyl-L-methionine.

Belongs to the class IV-like SAM-binding methyltransferase superfamily. RNA methyltransferase TrmH family. TrmL subfamily. In terms of assembly, homodimer.

The protein resides in the cytoplasm. It carries out the reaction cytidine(34) in tRNA + S-adenosyl-L-methionine = 2'-O-methylcytidine(34) in tRNA + S-adenosyl-L-homocysteine + H(+). It catalyses the reaction 5-carboxymethylaminomethyluridine(34) in tRNA(Leu) + S-adenosyl-L-methionine = 5-carboxymethylaminomethyl-2'-O-methyluridine(34) in tRNA(Leu) + S-adenosyl-L-homocysteine + H(+). Methylates the ribose at the nucleotide 34 wobble position in the two leucyl isoacceptors tRNA(Leu)(CmAA) and tRNA(Leu)(cmnm5UmAA). Catalyzes the methyl transfer from S-adenosyl-L-methionine to the 2'-OH of the wobble nucleotide. The chain is tRNA (cytidine(34)-2'-O)-methyltransferase from Escherichia coli O6:H1 (strain CFT073 / ATCC 700928 / UPEC).